A 72-amino-acid polypeptide reads, in one-letter code: Translation initiation factor IF-1 (72 aa).

Positions 1-72 (MAKDDVIEVD…DKGRITYRHK (72 aa)) constitute an S1-like domain.

The protein belongs to the IF-1 family. As to quaternary structure, component of the 30S ribosomal translation pre-initiation complex which assembles on the 30S ribosome in the order IF-2 and IF-3, IF-1 and N-formylmethionyl-tRNA(fMet); mRNA recruitment can occur at any time during PIC assembly.

It is found in the cytoplasm. In terms of biological role, one of the essential components for the initiation of protein synthesis. Stabilizes the binding of IF-2 and IF-3 on the 30S subunit to which N-formylmethionyl-tRNA(fMet) subsequently binds. Helps modulate mRNA selection, yielding the 30S pre-initiation complex (PIC). Upon addition of the 50S ribosomal subunit IF-1, IF-2 and IF-3 are released leaving the mature 70S translation initiation complex. The protein is Translation initiation factor IF-1 of Helicobacter hepaticus (strain ATCC 51449 / 3B1).